A 376-amino-acid chain; its full sequence is WD repeat-containing protein 86 (376 aa).

8 WD repeats span residues 13–52 (DHRG…CCAL), 55–94 (GHES…QVYR), 95–132 (GHTS…MSRE), 135–188 (GHRN…CHQT), 191–232 (GHTG…RVFR), 234–272 (HRGS…RTFT), 274–310 (HRRN…LRRV), and 313–350 (GHTF…GAPR).

The chain is WD repeat-containing protein 86 (WDR86) from Homo sapiens (Human).